The sequence spans 396 residues: S-adenosylmethionine synthase (396 aa).

Glu-11 provides a ligand contact to Mg(2+). His-17 contributes to the ATP binding site. Glu-45 serves as a coordination point for K(+). 2 residues coordinate L-methionine: Glu-58 and Gln-101. ATP-binding positions include 169–171 (DGK), 237–240 (SGRF), Asp-248, 254–255 (RK), Ala-271, Lys-275, and Lys-279. An L-methionine-binding site is contributed by Asp-248. Position 279 (Lys-279) interacts with L-methionine.

It belongs to the AdoMet synthase family. As to quaternary structure, homotetramer. The cofactor is Mn(2+). Mg(2+) is required as a cofactor. Requires Co(2+) as cofactor. It depends on K(+) as a cofactor.

It is found in the cytoplasm. It carries out the reaction L-methionine + ATP + H2O = S-adenosyl-L-methionine + phosphate + diphosphate. The protein operates within amino-acid biosynthesis; S-adenosyl-L-methionine biosynthesis; S-adenosyl-L-methionine from L-methionine: step 1/1. Its function is as follows. Catalyzes the formation of S-adenosylmethionine from methionine and ATP. The reaction comprises two steps that are both catalyzed by the same enzyme: formation of S-adenosylmethionine (AdoMet) and triphosphate, and subsequent hydrolysis of the triphosphate. The protein is S-adenosylmethionine synthase (SAMS) of Medicago sativa subsp. falcata (Sickle medic).